The chain runs to 185 residues: Elongation factor P (185 aa).

It belongs to the elongation factor P family.

The protein localises to the cytoplasm. It participates in protein biosynthesis; polypeptide chain elongation. In terms of biological role, involved in peptide bond synthesis. Stimulates efficient translation and peptide-bond synthesis on native or reconstituted 70S ribosomes in vitro. Probably functions indirectly by altering the affinity of the ribosome for aminoacyl-tRNA, thus increasing their reactivity as acceptors for peptidyl transferase. The protein is Elongation factor P of Syntrophomonas wolfei subsp. wolfei (strain DSM 2245B / Goettingen).